The sequence spans 249 residues: 5'-nucleotidase SurE (249 aa).

A divalent metal cation-binding residues include D8, D9, S39, and N91.

The protein belongs to the SurE nucleotidase family. A divalent metal cation serves as cofactor.

It localises to the cytoplasm. It catalyses the reaction a ribonucleoside 5'-phosphate + H2O = a ribonucleoside + phosphate. Its function is as follows. Nucleotidase that shows phosphatase activity on nucleoside 5'-monophosphates. This is 5'-nucleotidase SurE from Haemophilus influenzae (strain PittGG).